The sequence spans 738 residues: MKGFKLSCTASNSNRSTPACSPILRKRSRSPTPQNQDGDTMVEKGSDHSSDKSPSTPEQGVQRSCSSQSGRSGGKNSKKSQSWYNVLSPTYKQRNEDFRKLFKQLPDTERLIVDYSCALQRDILLQGRLYLSENWICFYSNIFRWETLLTVRLKDICSMTKEKTARLIPNAIQVCTDSEKHFFTSFGARDRTYMMMFRLWQNALLEKPLCPKELWHFVHQCYGNELGLTSDDEDYVPPDDDFNTMGYCEEIPVEENEVNDSSSKSSIETKPDASPQLPKKSITNSTLTSTGSSEAPVSFDGLPLEEEALEGDGSLEKELAIDNIMGEKIEMIAPVNSPSLDFNDNEDIPTELSDSSDTHDEGEVQAFYEDLSGRQYVNEVFNFSVDKLYDLLFTNSPFQRDFMEQRRFSDIIFHPWKKEENGNQSRVILYTITLTNPLAPKTATVRETQTMYKASQESECYVIDAEVLTHDVPYHDYFYTINRYTLTRVARNKSRLRVSTELRYRKQPWGLVKTFIEKNFWSGLEDYFRHLESELAKTESTYLAEMHRQSPKEKASKTTTVRRRKRPHAHLRVPHLEEVMSPVTTPTDEDVGHRIKHVAGSTQTRHIPEDTPNGFHLQSVSKLLLVISCVICFSLVLLVILNMMLFYKLWMLEYTTQTLTAWQGLRLQERLPQSQTEWAQLLESQQKYHDTELQKWREIIKSSVMLLDQMKDSLINLQNGIRSRDYTSESEEKRNRYH.

A disordered region spans residues 1–81 (MKGFKLSCTA…SGGKNSKKSQ (81 aa)). The segment covering 8–19 (CTASNSNRSTPA) has biased composition (polar residues). Phosphoserine is present on residues serine 28 and serine 30. Over residues 41-51 (MVEKGSDHSSD) the composition is skewed to basic and acidic residues. The span at 59–70 (QGVQRSCSSQSG) shows a compositional bias: low complexity. In terms of domain architecture, GRAM spans 96-163 (EDFRKLFKQL…KDICSMTKEK (68 aa)). The tract at residues 254 to 301 (EENEVNDSSSKSSIETKPDASPQLPKKSITNSTLTSTGSSEAPVSFDG) is disordered. Over residues 259–268 (NDSSSKSSIE) the composition is skewed to polar residues. Serine 274 carries the phosphoserine modification. A compositionally biased stretch (polar residues) spans 281–295 (SITNSTLTSTGSSEA). The VASt domain maps to 372–543 (SGRQYVNEVF…ELAKTESTYL (172 aa)). Phosphotyrosine is present on tyrosine 389. Positions 544 to 566 (AEMHRQSPKEKASKTTTVRRRKR) are disordered. Positions 545–556 (EMHRQSPKEKAS) are enriched in basic and acidic residues. Phosphoserine is present on residues serine 550 and serine 581. 3 positions are modified to phosphothreonine: threonine 584, threonine 585, and threonine 587. The helical transmembrane segment at 623 to 643 (LLLVISCVICFSLVLLVILNM) threads the bilayer.

It localises to the endoplasmic reticulum membrane. Its subcellular location is the cell membrane. Functionally, cholesterol transporter that mediates non-vesicular transport of cholesterol from the plasma membrane (PM) to the endoplasmic reticulum (ER). Contains unique domains for binding cholesterol and the PM, thereby serving as a molecular bridge for the transfer of cholesterol from the PM to the ER. Plays a crucial role in cholesterol homeostasis in the adrenal gland and has the unique ability to localize to the PM based on the level of membrane cholesterol. In lipid-poor conditions localizes to the ER membrane and in response to excess cholesterol in the PM is recruited to the endoplasmic reticulum-plasma membrane contact sites (EPCS) which is mediated by the GRAM domain. At the EPCS, the sterol-binding VASt/ASTER domain binds to the cholesterol in the PM and facilitates its transfer from the PM to ER. The sequence is that of Protein Aster-B (GRAMD1B) from Homo sapiens (Human).